The following is an 86-amino-acid chain: Cell division topological specificity factor (86 aa).

The protein belongs to the MinE family.

Functionally, prevents the cell division inhibition by proteins MinC and MinD at internal division sites while permitting inhibition at polar sites. This ensures cell division at the proper site by restricting the formation of a division septum at the midpoint of the long axis of the cell. In Parasynechococcus marenigrum (strain WH8102), this protein is Cell division topological specificity factor.